The sequence spans 339 residues: Prepilin peptidase EppA (339 aa).

The next 10 helical transmembrane spans lie at 3 to 23, 27 to 47, 48 to 68, 75 to 95, 99 to 119, 125 to 145, 146 to 166, 180 to 200, 204 to 224, and 319 to 339; these read LLNV…ITDI, IIPH…GYYY, FGFN…ILSI, VKLF…VFYI, ILYL…YKIL, DIIP…YFIN, IYEI…SIFV, LGYL…TYFI, VLLT…VIYA, and FVPF…LAII.

The protein belongs to the peptidase A24 family.

Its subcellular location is the cell membrane. Functionally, peptidase that processes the N-terminus of prepilins. This chain is Prepilin peptidase EppA, found in Methanocaldococcus jannaschii (strain ATCC 43067 / DSM 2661 / JAL-1 / JCM 10045 / NBRC 100440) (Methanococcus jannaschii).